Here is a 465-residue protein sequence, read N- to C-terminus: MKTMFEKIWEDHLVGELDAGSYLIYIDRHLIHEVTSPQAFEGLKLAGRKVRRPEATFATMDHNVSTRTRDLSLADPVSAIQMQTLKKNCDENGIRVYDFQNPDQGIIHVIAPEMGLTHPGMTIVCGDSHTSTHGAFGALAFGIGTSEVEHVLATQTLVQKRAKTMEIRVDGKLSDKVTAKDIILAIIGKIGTAGATGYVIEYRGSAIQALSMEARMTICNMSIEAGARAGLIAPDETTFNYIQGKDFSPKGVEWDLAVKKWKHYVTDEGAKFDRTVILHADEIAPMVTWGTSPSQVVSIKGVVPDPKDANDPVEKIGIESALKYMDLKSGQKIEDISINKVFIGSCTNSRIEDLRAAAATVKGKKVSSKVQAIVVPGSGRVKRQAEQEGLDKIFTAAGFEWRNPGCSMCLAMNDDVLEPGDRCASTSNRNFEGRQGKGGRTHLVGPEMAAAAAIEGHFVDIRNWK.

Cys-346, Cys-406, and Cys-409 together coordinate [4Fe-4S] cluster.

The protein belongs to the aconitase/IPM isomerase family. LeuC type 1 subfamily. Heterodimer of LeuC and LeuD. The cofactor is [4Fe-4S] cluster.

It carries out the reaction (2R,3S)-3-isopropylmalate = (2S)-2-isopropylmalate. It functions in the pathway amino-acid biosynthesis; L-leucine biosynthesis; L-leucine from 3-methyl-2-oxobutanoate: step 2/4. In terms of biological role, catalyzes the isomerization between 2-isopropylmalate and 3-isopropylmalate, via the formation of 2-isopropylmaleate. The chain is 3-isopropylmalate dehydratase large subunit from Leptospira interrogans serogroup Icterohaemorrhagiae serovar copenhageni (strain Fiocruz L1-130).